A 56-amino-acid chain; its full sequence is Potassium channel toxin alpha-KTx 9.2 (56 aa).

The first 28 residues, 1 to 28 (MSRLFTLVLIVLAMNVMMAIISDPVVEA), serve as a signal peptide directing secretion. Intrachain disulfides connect C31–C47, C34–C52, and C38–C54.

As to expression, expressed by the venom gland.

It is found in the secreted. Its function is as follows. Blocks small conductance calcium-activated potassium channels (KCNN, SK). Low toxicity by intracerebroventricular injection into mice. This chain is Potassium channel toxin alpha-KTx 9.2, found in Olivierus martensii (Manchurian scorpion).